A 258-amino-acid polypeptide reads, in one-letter code: UPF0246 protein HI_0984 (258 aa).

This sequence belongs to the UPF0246 family.

This chain is UPF0246 protein HI_0984, found in Haemophilus influenzae (strain ATCC 51907 / DSM 11121 / KW20 / Rd).